A 153-amino-acid chain; its full sequence is Pro-corazonin (153 aa).

An N-terminal signal peptide occupies residues 1 to 20 (MLRLLLLPLFLFTLSMACMG). Gln21 carries the pyrrolidone carboxylic acid modification. The residue at position 31 (Asn31) is an Asparagine amide. Residues 64–153 (LERCLLQLQH…AVEPNDYGKH (90 aa)) constitute a propeptide that is removed on maturation.

It belongs to the corazonin family. In terms of tissue distribution, expression is restricted to 24 neurons in the larval CNS (8 in the brain and 16 in the ventral nerve cord) and 12-16 neurons in the pars lateralis of the adult brain.

Its subcellular location is the secreted. In terms of biological role, cardioactive peptide. Corazonin is probably involved in the physiological regulation of the heart beat. Clock (Clk) and cycle (cyc) proteins negatively regulate Crz transcription in a cell-specific manner. The polypeptide is Pro-corazonin (Crz) (Drosophila virilis (Fruit fly)).